The sequence spans 66 residues: Beta-defensin 107A (66 aa).

A signal peptide spans 1-22 (MKIFFFIFAALILLAQIFQART). Intrachain disulfides connect Cys-37-Cys-51 and Cys-41-Cys-60.

The protein belongs to the beta-defensin family.

The protein localises to the secreted. Has antibacterial activity. This chain is Beta-defensin 107A (DEFB107A), found in Macaca fascicularis (Crab-eating macaque).